Here is a 504-residue protein sequence, read N- to C-terminus: UDP-N-acetylmuramoylalanine--D-glutamate ligase (504 aa).

129 to 135 lines the ATP pocket; the sequence is GTNGKTT.

Belongs to the MurCDEF family.

It is found in the cytoplasm. The enzyme catalyses UDP-N-acetyl-alpha-D-muramoyl-L-alanine + D-glutamate + ATP = UDP-N-acetyl-alpha-D-muramoyl-L-alanyl-D-glutamate + ADP + phosphate + H(+). Its pathway is cell wall biogenesis; peptidoglycan biosynthesis. Cell wall formation. Catalyzes the addition of glutamate to the nucleotide precursor UDP-N-acetylmuramoyl-L-alanine (UMA). This is UDP-N-acetylmuramoylalanine--D-glutamate ligase from Burkholderia mallei (strain NCTC 10247).